The sequence spans 224 residues: Probable 2-phosphosulfolactate phosphatase (224 aa).

The protein belongs to the ComB family. Requires Mg(2+) as cofactor.

The enzyme catalyses (2R)-O-phospho-3-sulfolactate + H2O = (2R)-3-sulfolactate + phosphate. The polypeptide is Probable 2-phosphosulfolactate phosphatase (Pseudothermotoga lettingae (strain ATCC BAA-301 / DSM 14385 / NBRC 107922 / TMO) (Thermotoga lettingae)).